The primary structure comprises 595 residues: Probable xyloglucan glycosyltransferase 9 (595 aa).

The next 2 helical transmembrane spans lie at 30 to 50 (AFVV…INGW) and 77 to 97 (ATYV…LFLI). Residue aspartate 177 is part of the active site. Aspartate 236 and aspartate 238 together coordinate substrate. Aspartate 330 is a catalytic residue. Helical transmembrane passes span 408-428 (LILP…TMFV), 433-453 (LPDW…ILPS), 545-564 (IYKK…ARSL), and 570-590 (IHFY…LDLI).

Belongs to the glycosyltransferase 2 family. Plant cellulose synthase-like C subfamily.

The protein resides in the golgi apparatus membrane. Its function is as follows. Probable beta-1,4-glucan synthase rather involved in the synthesis of the xyloglucan backbone than cellulose. Seems to work simultaneously with xyloglucan 6-xylosyltransferase. Xyloglucan is a noncellulosic polysaccharides of plant cell wall and consists of a glucan backbone substituted by xylose, galactose and fucose. This is Probable xyloglucan glycosyltransferase 9 (CSLC9) from Oryza sativa subsp. japonica (Rice).